The sequence spans 556 residues: Optineurin (556 aa).

The segment at 1–33 (MSSKPQIRPAENGEHCRSKMENGMDSMAPPTLS) is disordered. The segment covering 11-22 (ENGEHCRSKMEN) has biased composition (basic and acidic residues). Residues 38 to 164 (EEMVQQMKEL…SELQVKLNIA (127 aa)) are a coiled coil. An LIR motif is present at residues 168–173 (DSFVEI). Residues 219–487 (VSQLLCCLRN…LLKEQQNLED (269 aa)) adopt a coiled-coil conformation. The tract at residues 245–274 (ERLSKMENETSNCLESGTQTNQEEESSEAI) is disordered. Over residues 253–265 (ETSNCLESGTQTN) the composition is skewed to polar residues. A UBAN motif is present at residues 453–458 (DFHAER). The interval 496 to 524 (MQNRHGARAPDREHSPRLVQRGTGSQEWP) is disordered. Residues 526–556 (QRNISIYSCPKCEEILPDLDTLQIHVMDCIN) form a CCHC NOA-type zinc finger. Positions 534, 537, 550, and 554 each coordinate Zn(2+).

In terms of assembly, binds to linear ubiquitin chains. Interacts with LC3 family members. In terms of tissue distribution, expressed in erythrocytes, skeletal muscle, heart, spleen and brain. Weakly expressed in lung and liver (at protein level).

Its subcellular location is the cytoplasm. The protein localises to the perinuclear region. It is found in the golgi apparatus. The protein resides in the trans-Golgi network. It localises to the cytoplasmic vesicle. Its subcellular location is the recycling endosome. The protein localises to the autophagosome. Functionally, probably part of the TNF-alpha signaling pathway that can shift the equilibrium toward induction of cell death. May act by regulating membrane trafficking and cellular morphogenesis. May act as autophagy receptor that interacts directly with both the cargo to become degraded and an autophagy modifier of the MAP1 LC3 family. The polypeptide is Optineurin (OPTN) (Gallus gallus (Chicken)).